Consider the following 417-residue polypeptide: Serine hydroxymethyltransferase 3 (417 aa).

Residues leucine 121 and 125–127 contribute to the (6S)-5,6,7,8-tetrahydrofolate site; that span reads GHL. At lysine 229 the chain carries N6-(pyridoxal phosphate)lysine. 354-356 lines the (6S)-5,6,7,8-tetrahydrofolate pocket; the sequence is SPF.

Belongs to the SHMT family. As to quaternary structure, homodimer. Pyridoxal 5'-phosphate is required as a cofactor.

The protein localises to the cytoplasm. It catalyses the reaction (6R)-5,10-methylene-5,6,7,8-tetrahydrofolate + glycine + H2O = (6S)-5,6,7,8-tetrahydrofolate + L-serine. Its pathway is one-carbon metabolism; tetrahydrofolate interconversion. It functions in the pathway amino-acid biosynthesis; glycine biosynthesis; glycine from L-serine: step 1/1. In terms of biological role, catalyzes the reversible interconversion of serine and glycine with tetrahydrofolate (THF) serving as the one-carbon carrier. This reaction serves as the major source of one-carbon groups required for the biosynthesis of purines, thymidylate, methionine, and other important biomolecules. Also exhibits THF-independent aldolase activity toward beta-hydroxyamino acids, producing glycine and aldehydes, via a retro-aldol mechanism. This is Serine hydroxymethyltransferase 3 from Pseudomonas aeruginosa (strain ATCC 15692 / DSM 22644 / CIP 104116 / JCM 14847 / LMG 12228 / 1C / PRS 101 / PAO1).